A 277-amino-acid polypeptide reads, in one-letter code: uncharacterized protein (277 aa).

3 Solcar repeats span residues M1 to V84, I96 to W179, and P184 to H268. 6 consecutive transmembrane segments (helical) span residues Q3 to A24, L60 to F80, L102 to V122, C152 to A172, I190 to I210, and F240 to V261.

This sequence belongs to the mitochondrial carrier (TC 2.A.29) family.

The protein resides in the mitochondrion inner membrane. This is an uncharacterized protein from Schizosaccharomyces pombe (strain 972 / ATCC 24843) (Fission yeast).